A 345-amino-acid polypeptide reads, in one-letter code: Dihydroorotate dehydrogenase (quinone) (345 aa).

Residues 65-69 (AGLDK) and T89 contribute to the FMN site. K69 is a substrate binding site. 114–118 (NRMGF) contacts substrate. N142 and N175 together coordinate FMN. N175 provides a ligand contact to substrate. S178 functions as the Nucleophile in the catalytic mechanism. N180 contacts substrate. 2 residues coordinate FMN: K220 and T248. 249–250 (NT) contacts substrate. FMN is bound by residues G271, G300, and 321-322 (YT).

It belongs to the dihydroorotate dehydrogenase family. Type 2 subfamily. In terms of assembly, monomer. FMN is required as a cofactor.

The protein resides in the cell membrane. The catalysed reaction is (S)-dihydroorotate + a quinone = orotate + a quinol. It participates in pyrimidine metabolism; UMP biosynthesis via de novo pathway; orotate from (S)-dihydroorotate (quinone route): step 1/1. Functionally, catalyzes the conversion of dihydroorotate to orotate with quinone as electron acceptor. The sequence is that of Dihydroorotate dehydrogenase (quinone) from Burkholderia cenocepacia (strain ATCC BAA-245 / DSM 16553 / LMG 16656 / NCTC 13227 / J2315 / CF5610) (Burkholderia cepacia (strain J2315)).